A 314-amino-acid chain; its full sequence is Lysophospholipase D GDPD1 (314 aa).

The Extracellular portion of the chain corresponds to 1-3; sequence MSS. The chain crosses the membrane as a helical span at residues 4 to 24; sequence TAAFCLLSTLGGYLVTSFLLL. The Cytoplasmic portion of the chain corresponds to 25–195; sequence KYPALLHQRK…VDKCYKENSD (171 aa). Residues 40–309 form the GP-PDE domain; sequence SRHISHRGGA…DYPTKLKEFL (270 aa). Residues E72, D74, and H87 each coordinate a divalent metal cation. A helical membrane pass occupies residues 196–216; it reads IPILFSLQRVLLILGLFFTGL. The Extracellular portion of the chain corresponds to 217-314; it reads LPFVPIREQF…LKEFLNNMSA (98 aa).

Belongs to the glycerophosphoryl diester phosphodiesterase family.

It localises to the cytoplasm. The protein localises to the membrane. Its subcellular location is the perinuclear region. The protein resides in the endoplasmic reticulum. It carries out the reaction a 1-O-alkyl-sn-glycero-3-phosphocholine + H2O = a 1-O-alkyl-sn-glycero-3-phosphate + choline + H(+). The enzyme catalyses 1-hexadecanoyl-sn-glycero-3-phosphocholine + H2O = 1-hexadecanoyl-sn-glycero-3-phosphate + choline + H(+). The catalysed reaction is 1-hexadecanoyl-sn-glycero-3-phosphoethanolamine + H2O = 1-hexadecanoyl-sn-glycero-3-phosphate + ethanolamine + H(+). It catalyses the reaction N-hexadecanoyl-sn-glycero-3-phosphoethanolamine + H2O = N-hexadecanoylethanolamine + sn-glycerol 3-phosphate + H(+). It carries out the reaction N-(5Z,8Z,11Z,14Z-eicosatetraenoyl)-1-(9Z-octadecenoyl)-sn-glycero-3-phosphoethanolamine + H2O = N-(5Z,8Z,11Z,14Z-eicosatetraenoyl)-ethanolamine + 1-(9Z-octadecenoyl)-sn-glycero-3-phosphate + H(+). The enzyme catalyses N,1-di-(9Z-octadecenoyl)-sn-glycero-3-phosphoethanolamine + H2O = N-(9Z-octadecenoyl) ethanolamine + 1-(9Z-octadecenoyl)-sn-glycero-3-phosphate + H(+). The catalysed reaction is N-hexadecanoyl-1-(9Z-octadecenoyl)-sn-glycero-3-phosphoethanolamine + H2O = N-hexadecanoylethanolamine + 1-(9Z-octadecenoyl)-sn-glycero-3-phosphate + H(+). It catalyses the reaction 1-O-hexadecyl-sn-glycero-3-phosphocholine + H2O = 1-O-hexadecyl-sn-glycero-3-phosphate + choline + H(+). It carries out the reaction 1-(9Z-octadecenoyl)-sn-glycero-3-phosphocholine + H2O = 1-(9Z-octadecenoyl)-sn-glycero-3-phosphate + choline + H(+). The enzyme catalyses N,1-dihexadecanoyl-sn-glycero-3-phosphoethanolamine + H2O = N-hexadecanoylethanolamine + 1-hexadecanoyl-sn-glycero-3-phosphate + H(+). The catalysed reaction is 1-O-(1Z-octadecenyl)-sn-glycero-3-phospho-(N-5Z,8Z,11Z,14Z-eicosatetraenoyl)-ethanolamine + H2O = 1-O-(1Z-octadecenyl)-sn-glycero-3-phosphate + N-(5Z,8Z,11Z,14Z-eicosatetraenoyl)-ethanolamine + H(+). It catalyses the reaction 1-O-(1Z-octadecenyl)-sn-glycero-3-phospho-(N-9Z-octadecenoyl)-ethanolamine + H2O = 1-O-(1Z-octadecenyl)-sn-glycero-3-phosphate + N-(9Z-octadecenoyl) ethanolamine + H(+). It carries out the reaction 1-O-(1Z-octadecenyl)-sn-glycero-3-phospho-N-hexadecanoyl-ethanolamine + H2O = 1-O-(1Z-octadecenyl)-sn-glycero-3-phosphate + N-hexadecanoylethanolamine + H(+). Its activity is regulated as follows. Lysophospholipase D activity is increased by magnesium and manganese and inhibited by calcium in a concentration dependent manner. Loss of lysophospholipase D activity by addition of EDTA. Hydrolyzes lysoglycerophospholipids to produce lysophosphatidic acid (LPA) and the corresponding amines. Shows a preference for 1-O-alkyl-sn-glycero-3-phosphocholine (lyso-PAF), lysophosphatidylethanolamine (lyso-PE) and lysophosphatidylcholine (lyso-PC). May be involved in bioactive N-acylethanolamine biosynthesis from both N-acyl-lysoplasmenylethanolamin (N-acyl-lysoPlsEt) and N-acyl-lysophosphatidylethanolamin (N-acyl-lysoPE). In addition, hydrolyzes glycerophospho-N-acylethanolamine to N-acylethanolamine. Does not display glycerophosphodiester phosphodiesterase activity, since it cannot hydrolyze either glycerophosphoinositol or glycerophosphocholine. The polypeptide is Lysophospholipase D GDPD1 (Rattus norvegicus (Rat)).